We begin with the raw amino-acid sequence, 911 residues long: MPSIIDRVLKISDNRVLKRMQATVDAVNLLEDDFRALSDAELRAETDTLRARHADGESLDLLLPEAFAAVREAAGRTLGQRHYDVQLLGGIALHQGNIAEMKTGEGKTLVATAPAYLNALSGRGVHVVTVNDFLASYQADLMGRVFRFLGMQTGVIVAGQTPAVRREQYAADITYGTNNEFGFDFLRDNMAWSLDELVQREHHYAIVDEVDSILIDEARTPLIISGPAQGEANRWYGEFARLVRRLEADTDYEVDHKKRTVGILGPGIEKVEDHLGITNLYETQNTTLIQFLNNAVKAKELFKRDKDYVVLDGEVQIVDEHTGRVLKGRRYNEGLHQAIEAKEGVEVKPENQTLATVTLQNYFRGYEKLAGMTGTAETEAAEFTSTYGLGVVVIPPNRERQRVDRNDVVYKNEKVKFDAVVDDIAERHAKGQPVLVGTTSVEKSEYLSTLLAKRGIRHEVLNAKNHAREAAIVAQAGRPGAVTVATNMAGRGTDIMLGGNAEFTAVARMQELGLDAAEDPEAYEARWPEVLAQAEAAVEDAHREVIEAGGLYVVGTERHDSRRIDNQLRGRSGRQGDPGESRFYLSLTDELMRNFNPGVAQRIMNSPSIPDDMALEFGFVSKAIQNAQAQVEGRNAEQRKNVLKYDDVMNRQREAIYTDRRSILEGEDLQDRVRRFVEDAVGNIVDAATEEGQATDWDLDQLWRDLAELYPVGISQEDVLDEVGGRGRLKAEVLKRELVSDALLAYEDREAQVGSEALREAERRVVLASIGRHWQEHLYEMDYLKEGIGLRAMAQREPLVEYQREGYTMFQNMLAGIREDAVRTLFQAQISAAPAPTSLPGVKDARAVTMAPQISVEGIDAPQRPAQLRFTGPSEDGQSAVTRSGTDSGATVAAGTNRRSRRQAERRGRRG.

Residues Q86, 104 to 108, and D494 each bind ATP; that span reads GEGKT. Positions 856-911 are disordered; that stretch reads VEGIDAPQRPAQLRFTGPSEDGQSAVTRSGTDSGATVAAGTNRRSRRQAERRGRRG. Residues 876–889 are compositionally biased toward polar residues; that stretch reads DGQSAVTRSGTDSG. Residues 902–911 show a composition bias toward basic and acidic residues; that stretch reads RQAERRGRRG.

Belongs to the SecA family. Monomer and homodimer. Part of the essential Sec protein translocation apparatus which comprises SecA, SecYEG and auxiliary proteins SecDF. Other proteins may also be involved.

It localises to the cell membrane. Its subcellular location is the cytoplasm. The enzyme catalyses ATP + H2O + cellular proteinSide 1 = ADP + phosphate + cellular proteinSide 2.. Its function is as follows. Part of the Sec protein translocase complex. Interacts with the SecYEG preprotein conducting channel. Has a central role in coupling the hydrolysis of ATP to the transfer of proteins into and across the cell membrane, serving as an ATP-driven molecular motor driving the stepwise translocation of polypeptide chains across the membrane. The sequence is that of Protein translocase subunit SecA from Micrococcus luteus (strain ATCC 4698 / DSM 20030 / JCM 1464 / CCM 169 / CCUG 5858 / IAM 1056 / NBRC 3333 / NCIMB 9278 / NCTC 2665 / VKM Ac-2230) (Micrococcus lysodeikticus).